Here is a 68-residue protein sequence, read N- to C-terminus: Conotoxin Cal12.1p3 (68 aa).

Residues 1–21 constitute a propeptide that is removed on maturation; it reads DLITNSYTRGKPRHVTSWPKL.

In terms of processing, contains 4 disulfide bonds. As to expression, expressed by the venom duct.

The protein localises to the secreted. This is Conotoxin Cal12.1p3 from Californiconus californicus (California cone).